The following is a 466-amino-acid chain: Argininosuccinate lyase (466 aa).

Residues Ser-27, Asn-114, and Thr-159 each contribute to the 2-(N(omega)-L-arginino)succinate site. Residue His-160 is the Proton acceptor of the active site. Residue Ser-281 is the Proton donor of the active site. 4 residues coordinate 2-(N(omega)-L-arginino)succinate: Asn-289, Tyr-321, Gln-326, and Lys-329.

This sequence belongs to the lyase 1 family. Argininosuccinate lyase subfamily. Homotetramer. The N-terminus is blocked. Eye lens.

The catalysed reaction is 2-(N(omega)-L-arginino)succinate = fumarate + L-arginine. It participates in amino-acid biosynthesis; L-arginine biosynthesis; L-arginine from L-ornithine and carbamoyl phosphate: step 3/3. Its function is as follows. Delta crystallin, the principal crystallin in embryonic lens, is found only in birds and reptiles. This protein also functions as an enzymatically active argininosuccinate lyase, but it has a low activity. This is Argininosuccinate lyase (ASL) from Columba livia (Rock dove).